The primary structure comprises 471 residues: Ubiquitin carboxyl-terminal hydrolase calypso (471 aa).

One can recognise a UCH catalytic domain in the interval 45-276 (GWLELESDPG…IRFNLMAVVP (232 aa)). The active-site Nucleophile is the C131. The Proton donor role is filled by H213. The ULD domain maps to 375–403 (NYDKFICTFLSMLAHQGVLGELVSQHLLP). A positively charged C-terminal tail required for binding nucleosomes region spans residues 405–471 (KKVSGQGAAN…KGRNKCRKRK (67 aa)). The tract at residues 410-471 (QGAANRISKQ…KGRNKCRKRK (62 aa)) is disordered. Residues 420 to 447 (STTASAGGSTTGATASTPKTQQQQAAAA) are compositionally biased toward low complexity. Positions 457 to 471 (PGRRRKGRNKCRKRK) are enriched in basic residues.

This sequence belongs to the peptidase C12 family. BAP1 subfamily. In terms of assembly, catalytic component of the polycomb repressive deubiquitinase (PR-DUB) complex, at least composed of caly/calypso, Asx and sba (MBD5/6 homolog). The PR-DUB complex associates with nucleosomes to mediate deubiquitination of histone H2AK118ub1 substrates; the association requires the positively charged C-terminal tail of caly, probably due to direct binding of DNA. Interacts (via ULD domain) with Asx (via DEUBAD domain); the interaction produces a stable heterodimer with a composite binding site for ubiquitin. Homodimerizes (via coiled-coil hinge-region between the UCH and ULD domains) to mediate assembly of 2 copies of the caly-Asx heterodimer into a bisymmetric tetramer; dimerization enhances PR-DUB association with nucleosomes.

It is found in the nucleus. It carries out the reaction Thiol-dependent hydrolysis of ester, thioester, amide, peptide and isopeptide bonds formed by the C-terminal Gly of ubiquitin (a 76-residue protein attached to proteins as an intracellular targeting signal).. Functionally, catalytic component of the polycomb repressive deubiquitinase (PR-DUB) complex, a complex that specifically mediates deubiquitination of histone H2A monoubiquitinated at 'Lys-119' (H2AK118ub1). Mediates bisymmetric organization of the PR-DUB complex and is involved in association with nucleosomes to mediate deubiquitination. Does not deubiquitinate monoubiquitinated histone H2B. Required to maintain the transcriptionally repressive state of homeotic genes throughout development. The PR-DUB complex has weak or no activity toward 'Lys-48'- and 'Lys-63'-linked polyubiquitin chains. Polycomb group (PcG) protein. In Drosophila yakuba (Fruit fly), this protein is Ubiquitin carboxyl-terminal hydrolase calypso.